Here is a 226-residue protein sequence, read N- to C-terminus: ATP synthase F(0) complex subunit a (226 aa).

The next 6 membrane-spanning stretches (helical) occupy residues 12–32 (PTMM…ILFP), 68–88 (WALM…LGLL), 97–117 (QLSM…ITGF), 138–158 (IPML…ALAV), 164–184 (ITAG…LMNI), and 200–222 (TILE…SLYL).

Belongs to the ATPase A chain family. Component of the ATP synthase complex composed at least of ATP5F1A/subunit alpha, ATP5F1B/subunit beta, ATP5MC1/subunit c (homooctomer), MT-ATP6/subunit a, MT-ATP8/subunit 8, ATP5ME/subunit e, ATP5MF/subunit f, ATP5MG/subunit g, ATP5MK/subunit k, ATP5MJ/subunit j, ATP5F1C/subunit gamma, ATP5F1D/subunit delta, ATP5F1E/subunit epsilon, ATP5PF/subunit F6, ATP5PB/subunit b, ATP5PD/subunit d, ATP5PO/subunit OSCP. ATP synthase complex consists of a soluble F(1) head domain (subunits alpha(3) and beta(3)) - the catalytic core - and a membrane F(0) domain - the membrane proton channel (subunits c, a, 8, e, f, g, k and j). These two domains are linked by a central stalk (subunits gamma, delta, and epsilon) rotating inside the F1 region and a stationary peripheral stalk (subunits F6, b, d, and OSCP). Interacts with DNAJC30; interaction is direct.

The protein resides in the mitochondrion inner membrane. The enzyme catalyses H(+)(in) = H(+)(out). Functionally, subunit a, of the mitochondrial membrane ATP synthase complex (F(1)F(0) ATP synthase or Complex V) that produces ATP from ADP in the presence of a proton gradient across the membrane which is generated by electron transport complexes of the respiratory chain. ATP synthase complex consist of a soluble F(1) head domain - the catalytic core - and a membrane F(1) domain - the membrane proton channel. These two domains are linked by a central stalk rotating inside the F(1) region and a stationary peripheral stalk. During catalysis, ATP synthesis in the catalytic domain of F(1) is coupled via a rotary mechanism of the central stalk subunits to proton translocation. With the subunit c (ATP5MC1), forms the proton-conducting channel in the F(0) domain, that contains two crucial half-channels (inlet and outlet) that facilitate proton movement from the mitochondrial intermembrane space (IMS) into the matrix. Protons are taken up via the inlet half-channel and released through the outlet half-channel, following a Grotthuss mechanism. The chain is ATP synthase F(0) complex subunit a from Felis catus (Cat).